Here is a 188-residue protein sequence, read N- to C-terminus: Heterodisulfide reductase subunit C-like protein (188 aa).

4Fe-4S ferredoxin-type domains follow at residues 34–64 and 78–109; these read KELG…FEWY and DELL…FEVM. Positions 44, 47, 50, 54, 89, 92, 95, and 99 each coordinate [4Fe-4S] cluster.

This sequence belongs to the HdrC family. In terms of assembly, the heterodisulfide reductase is composed of three subunits; HdlA, HdlB and HdlC. It forms a complex with the F420-non-reducing hydrogenase (Mvh), which provides the reducing equivalents to the heterodisulfide reductase.

It is found in the cytoplasm. Functionally, has oxidoreductase activity. The Hdl and Mvh subunits may together mediate electron transfer from hydrogen to an unidentified electron acceptor on the cytoplasmic side of the membrane. This is Heterodisulfide reductase subunit C-like protein (hdlC) from Archaeoglobus profundus (strain DSM 5631 / JCM 9629 / NBRC 100127 / Av18).